Here is a 246-residue protein sequence, read N- to C-terminus: AA9 family lytic polysaccharide monooxygenase D (246 aa).

The N-terminal stretch at 1-19 (MHLLSLLFPVIALIPTVLS) is a signal peptide. Position 20 (histidine 20) interacts with Cu(2+). Residues cysteine 78 and cysteine 196 are joined by a disulfide bond. Residues asparagine 86, asparagine 141, and asparagine 156 are each glycosylated (N-linked (GlcNAc...) asparagine). O2-binding residues include histidine 182 and glutamine 191. Residue tyrosine 193 participates in Cu(2+) binding. Residue asparagine 235 is glycosylated (N-linked (GlcNAc...) asparagine).

Belongs to the polysaccharide monooxygenase AA9 family. It depends on Cu(2+) as a cofactor.

It localises to the secreted. It carries out the reaction [(1-&gt;4)-beta-D-glucosyl]n+m + reduced acceptor + O2 = 4-dehydro-beta-D-glucosyl-[(1-&gt;4)-beta-D-glucosyl]n-1 + [(1-&gt;4)-beta-D-glucosyl]m + acceptor + H2O.. Lytic polysaccharide monooxygenase (LPMO) that depolymerizes crystalline and amorphous polysaccharides via the oxidation of scissile alpha- or beta-(1-4)-glycosidic bonds, yielding C1 and C4 oxidation products. Catalysis by LPMOs requires the reduction of the active-site copper from Cu(II) to Cu(I) by a reducing agent and H(2)O(2) or O(2) as a cosubstrate. In Botryotinia fuckeliana (strain B05.10) (Noble rot fungus), this protein is AA9 family lytic polysaccharide monooxygenase D.